Consider the following 171-residue polypeptide: 3-hydroxyanthranilate 3,4-dioxygenase (171 aa).

R45 is an O2 binding site. 3 residues coordinate Fe cation: H49, E55, and H93. E55 lines the substrate pocket. Substrate contacts are provided by R97 and E107. 4 residues coordinate a divalent metal cation: C122, C125, C159, and C162.

The protein belongs to the 3-HAO family. The cofactor is Fe(2+).

It localises to the cytoplasm. It catalyses the reaction 3-hydroxyanthranilate + O2 = (2Z,4Z)-2-amino-3-carboxymuconate 6-semialdehyde. Its pathway is cofactor biosynthesis; NAD(+) biosynthesis; quinolinate from L-kynurenine: step 3/3. Catalyzes the oxidative ring opening of 3-hydroxyanthranilate to 2-amino-3-carboxymuconate semialdehyde, which spontaneously cyclizes to quinolinate. This chain is 3-hydroxyanthranilate 3,4-dioxygenase, found in Candida albicans (strain SC5314 / ATCC MYA-2876) (Yeast).